A 621-amino-acid polypeptide reads, in one-letter code: Bifunctional protein GlmU (621 aa).

A pyrophosphorylase region spans residues 1–229; it reads MAERDLAVAI…AREIVGINDR (229 aa). Residues 11 to 14, Lys25, Gln76, and 81 to 82 each bind UDP-N-acetyl-alpha-D-glucosamine; these read LAAG and GT. Residue Asp106 coordinates Mg(2+). 4 residues coordinate UDP-N-acetyl-alpha-D-glucosamine: Gly143, Glu158, Asn173, and Asn227. Asn227 provides a ligand contact to Mg(2+). The interval 230–250 is linker; the sequence is RQLAQAYQILQDRLKEAWMEA. The interval 251–621 is N-acetyltransferase; sequence GVTFVDPDSV…TGVGIPSCPP (371 aa). 2 residues coordinate UDP-N-acetyl-alpha-D-glucosamine: Arg332 and Lys350. His362 (proton acceptor) is an active-site residue. UDP-N-acetyl-alpha-D-glucosamine contacts are provided by Tyr365 and Asn376. Acetyl-CoA contacts are provided by residues Ala379, 385-386, Ala422, and Arg441; that span reads NY. The interval 601–621 is disordered; sequence ATPPSPQRADGTGVGIPSCPP.

It in the N-terminal section; belongs to the N-acetylglucosamine-1-phosphate uridyltransferase family. This sequence in the C-terminal section; belongs to the transferase hexapeptide repeat family. As to quaternary structure, homotrimer. Mg(2+) serves as cofactor.

Its subcellular location is the cytoplasm. The catalysed reaction is alpha-D-glucosamine 1-phosphate + acetyl-CoA = N-acetyl-alpha-D-glucosamine 1-phosphate + CoA + H(+). It catalyses the reaction N-acetyl-alpha-D-glucosamine 1-phosphate + UTP + H(+) = UDP-N-acetyl-alpha-D-glucosamine + diphosphate. It participates in nucleotide-sugar biosynthesis; UDP-N-acetyl-alpha-D-glucosamine biosynthesis; N-acetyl-alpha-D-glucosamine 1-phosphate from alpha-D-glucosamine 6-phosphate (route II): step 2/2. The protein operates within nucleotide-sugar biosynthesis; UDP-N-acetyl-alpha-D-glucosamine biosynthesis; UDP-N-acetyl-alpha-D-glucosamine from N-acetyl-alpha-D-glucosamine 1-phosphate: step 1/1. It functions in the pathway bacterial outer membrane biogenesis; LPS lipid A biosynthesis. Catalyzes the last two sequential reactions in the de novo biosynthetic pathway for UDP-N-acetylglucosamine (UDP-GlcNAc). The C-terminal domain catalyzes the transfer of acetyl group from acetyl coenzyme A to glucosamine-1-phosphate (GlcN-1-P) to produce N-acetylglucosamine-1-phosphate (GlcNAc-1-P), which is converted into UDP-GlcNAc by the transfer of uridine 5-monophosphate (from uridine 5-triphosphate), a reaction catalyzed by the N-terminal domain. The chain is Bifunctional protein GlmU from Synechococcus sp. (strain JA-3-3Ab) (Cyanobacteria bacterium Yellowstone A-Prime).